A 110-amino-acid polypeptide reads, in one-letter code: Minor capsid protein VP2 (110 aa).

The protein belongs to the vesivirus VP2 protein family. Homooligomer. The portal-like structure consists in 12 copies of VP2. Interacts with capsid protein VP1.

The protein localises to the virion. Its subcellular location is the host cytoplasm. Functionally, minor structural protein that forms a portal-like structure at a unique three-fold axis of symmetry, following binding to the host receptor. The channel formed by VP2 may allow the delivery of the viral genome through the host endosomal membrane. The protein is Minor capsid protein VP2 of Vesicular exanthema of swine virus serotype A48 (isolate Swine/United States/A48/1948) (VESV).